The primary structure comprises 329 residues: Quinone oxidoreductase (329 aa).

The residue at position 2 (A2) is an N-acetylalanine. Position 23 is an N6-acetyllysine (K23). NADP(+) contacts are provided by residues Y53, 158–161 (SGGV), G181, H200, N229, 246–249 (VGSR), and 269–271 (VTV). The residue at position 248 (S248) is a Phosphoserine. Residue K296 is modified to N6-succinyllysine.

Belongs to the zinc-containing alcohol dehydrogenase family. Quinone oxidoreductase subfamily. In terms of assembly, homotetramer.

The protein resides in the cytoplasm. The enzyme catalyses 2 a quinone + NADPH + H(+) = 2 a 1,4-benzosemiquinone + NADP(+). Its function is as follows. Does not have alcohol dehydrogenase activity. Binds NADP and acts through a one-electron transfer process. Orthoquinones, such as 1,2-naphthoquinone or 9,10-phenanthrenequinone, are the best substrates (in vitro). May act in the detoxification of xenobiotics. Interacts with (AU)-rich elements (ARE) in the 3'-UTR of target mRNA species and enhances their stability. NADPH binding interferes with mRNA binding. The sequence is that of Quinone oxidoreductase (CRYZ) from Pongo abelii (Sumatran orangutan).